Here is a 416-residue protein sequence, read N- to C-terminus: Type II methyltransferase M.PspPI (416 aa).

The SAM-dependent MTase C5-type domain maps to 77–410 (YSLVELFAGA…KAIIRMLNAA (334 aa)). Residue Cys149 is part of the active site.

It belongs to the class I-like SAM-binding methyltransferase superfamily. C5-methyltransferase family.

It catalyses the reaction a 2'-deoxycytidine in DNA + S-adenosyl-L-methionine = a 5-methyl-2'-deoxycytidine in DNA + S-adenosyl-L-homocysteine + H(+). Functionally, a methylase, recognizes the double-stranded sequence 5'-GGNCC-3', methylates C-4 on both strands, and protects the DNA from cleavage by the PspPI endonuclease. In Psychrobacter sp. (strain TA137), this protein is Type II methyltransferase M.PspPI.